A 774-amino-acid chain; its full sequence is Transmembrane GTPase fzo-1 (774 aa).

Residues 1–29 (MSGTASLVHTLPASGDSNHRGLHSLKNSR) are disordered. At 1–617 (MSGTASLVHT…EEQAMMTQMV (617 aa)) the chain is on the cytoplasmic side. The segment covering 20 to 29 (RGLHSLKNSR) has biased composition (basic residues). Positions 51 to 71 (YGELKDNVAELEGVYKDIKEN) form a coiled coil. Positions 97–352 (QRDNMKVVFF…TRALEFQNFE (256 aa)) constitute a Dynamin-type G domain. A G1 motif region spans residues 107-114 (GRTSNGKS). Residue 110–115 (SNGKST) coordinates GTP. The segment at 133 to 134 (TT) is G2 motif. The interval 211–214 (DSPG) is G3 motif. A GTP-binding site is contributed by 270–273 (NRWD). The tract at residues 270–273 (NRWD) is G4 motif. Residue glutamate 300 is a region of interest, G5 motif. Serine 317 is a GTP binding site. A coiled-coil region spans residues 385–415 (NLNSVLTSAAEQRSKLQNNLNESTRTFNECR). Residues 618–638 (LTSAAFLANGSLGVLVVGGIV) traverse the membrane as a helical segment. Residues 639-640 (YK) lie on the Mitochondrial intermembrane side of the membrane. A helical transmembrane segment spans residues 641–661 (AVGWRVIAVGGAAYAGLYAWE). The Cytoplasmic portion of the chain corresponds to 662–774 (RMRWNSGAKE…YLRSDSPPTP (113 aa)).

It belongs to the TRAFAC class dynamin-like GTPase superfamily. Dynamin/Fzo/YdjA family. Mitofusin subfamily. In terms of assembly, interacts with ced-9; interaction may be suppressed by interaction of ced-9 with egl-1.

The protein resides in the mitochondrion outer membrane. The catalysed reaction is GTP + H2O = GDP + phosphate + H(+). Its function is as follows. Probable transmembrane GTPase. Mediates mitochondrial fusion. Fusion of mitochondria occurs in many cell types and constitutes an important step in mitochondria morphology, which is balanced between fusion and fission. Dispensable for normal apoptotic processes during embryonic development. This Caenorhabditis elegans protein is Transmembrane GTPase fzo-1.